A 511-amino-acid chain; its full sequence is Aldehyde dehydrogenase 2, mitochondrial (511 aa).

The transit peptide at 1–21 (MSKSKTKTDKRNQSSLSRIKL) directs the protein to the mitochondrion. A disordered region spans residues 72–92 (VSEKSQHDSTEEDITQVSEKS). 274–279 (GSTLVG) is an NAD(+) binding site. Glutamate 297 functions as the Proton acceptor in the catalytic mechanism. The active-site Nucleophile is the cysteine 331.

This sequence belongs to the aldehyde dehydrogenase family.

Its subcellular location is the mitochondrion matrix. It catalyses the reaction an aldehyde + NAD(+) + H2O = a carboxylate + NADH + 2 H(+). It participates in alcohol metabolism; ethanol degradation; acetate from ethanol: step 2/2. The sequence is that of Aldehyde dehydrogenase 2, mitochondrial (ALD2) from Saccharomyces cerevisiae (Baker's yeast).